Here is an 80-residue protein sequence, read N- to C-terminus: Translation initiation factor IF-1, chloroplastic (80 aa).

The region spanning 1-74 (MKEQKWIHEG…TRGRIIYRLR (74 aa)) is the S1-like domain.

It belongs to the IF-1 family. In terms of assembly, component of the 30S ribosomal translation pre-initiation complex which assembles on the 30S ribosome in the order IF-2 and IF-3, IF-1 and N-formylmethionyl-tRNA(fMet); mRNA recruitment can occur at any time during PIC assembly.

Its subcellular location is the plastid. It localises to the chloroplast. Its function is as follows. One of the essential components for the initiation of protein synthesis. Stabilizes the binding of IF-2 and IF-3 on the 30S subunit to which N-formylmethionyl-tRNA(fMet) subsequently binds. Helps modulate mRNA selection, yielding the 30S pre-initiation complex (PIC). Upon addition of the 50S ribosomal subunit IF-1, IF-2 and IF-3 are released leaving the mature 70S translation initiation complex. The sequence is that of Translation initiation factor IF-1, chloroplastic from Illicium oligandrum (Star anise).